The primary structure comprises 130 residues: Ribosome biogenesis inhibitor MINAS-60 (130 aa).

The interval 61-130 (SKVQRIPTRP…RRRRPVTSSC (70 aa)) is disordered. Positions 109–130 (KGRRRRRRMRRRRRRRPVTSSC) are enriched in basic residues.

As to quaternary structure, interacts with 60S ribosome assembly factors GTPBP4 and MRTO4.

Its subcellular location is the nucleus. The protein localises to the nucleolus. Its function is as follows. Acts as a late-stage inhibitor of pre-60S ribosome assembly by preventing pre-60S ribosome export from nucleus. The polypeptide is Ribosome biogenesis inhibitor MINAS-60 (Mus musculus (Mouse)).